Consider the following 365-residue polypeptide: Eukaryotic translation initiation factor 3 subunit H (365 aa).

The MPN domain maps to 11–160 (VQVEALVVMK…LRAFRLSPQF (150 aa)). Residues 273–303 (YQRSLAREQTKIAAWQAKRKAENATRAQLKQ) are a coiled coil.

It belongs to the eIF-3 subunit H family. As to quaternary structure, component of the eukaryotic translation initiation factor 3 (eIF-3) complex.

The protein localises to the cytoplasm. Its function is as follows. Component of the eukaryotic translation initiation factor 3 (eIF-3) complex, which is involved in protein synthesis of a specialized repertoire of mRNAs and, together with other initiation factors, stimulates binding of mRNA and methionyl-tRNAi to the 40S ribosome. The eIF-3 complex specifically targets and initiates translation of a subset of mRNAs involved in cell proliferation. This chain is Eukaryotic translation initiation factor 3 subunit H, found in Coccidioides immitis (strain RS) (Valley fever fungus).